The primary structure comprises 2359 residues: Voltage-dependent T-type calcium channel subunit alpha-1H (2359 aa).

The interval 1-63 (MTEGTLAADE…PGTECGADLG (63 aa)) is disordered. The Cytoplasmic segment spans residues 1 to 100 (MTEGTLAADE…SWCLRLVCNP (100 aa)). The span at 24–36 (APVRASPASPGAP) shows a compositional bias: low complexity. Residues 87-422 (TRPRSWCLRL…LCLVVIATQF (336 aa)) form an I repeat. Residues 101–119 (WFEHISMLVIMLNCVTLGM) traverse the membrane as a helical segment. The Extracellular segment spans residues 120 to 141 (FRPCEDVECRSERCSILEAFDD). A Zn(2+)-binding site is contributed by Asp-140. A helical transmembrane segment spans residues 142 to 160 (FIFAFFAVEMVIKMVALGL). At 161–169 (FGQKCYLGD) the chain is on the cytoplasmic side. The helical transmembrane segment at 170–184 (TWNRLDFFIVMAGMM) threads the bilayer. At 185–193 (EYSLDGHNV) the chain is on the extracellular side. Zn(2+) contacts are provided by Asp-189 and His-191. Asn-192 carries an N-linked (GlcNAc...) asparagine glycan. The chain crosses the membrane as a helical span at residues 194 to 212 (SLSAIRTVRVLRPLRAINR). Topologically, residues 213–232 (VPSMRILVTLLLDTLPMLGN) are cytoplasmic. Residues 233–253 (VLLLCFFVFFIFGIVGVQLWA) traverse the membrane as a helical segment. Over 254-394 (GLLRNRCFLD…YYVMDAHSFY (141 aa)) the chain is Extracellular. Residue Asn-271 is glycosylated (N-linked (GlcNAc...) asparagine). The chain crosses the membrane as a helical span at residues 395 to 419 (NFIYFILLIIMGSFFMINLCLVVIA). The Cytoplasmic portion of the chain corresponds to 420 to 790 (TQFSETKQRE…GKLRRIVDSK (371 aa)). Disordered regions lie at residues 490-573 (VDPS…SESV), 620-656 (GTVN…SPRP), and 737-769 (GDCR…ASQP). Over residues 503–532 (RRPRRAGRRTASVHHLVYHHHHHHHHHYHF) the composition is skewed to basic residues. Positions 557 to 566 (PPSPPSPGHG) are enriched in pro residues. Over residues 620–631 (GTVNSKGGTSSR) the composition is skewed to polar residues. An II repeat occupies 776 to 1015 (WASFSGKLRR…LLVAILVEGF (240 aa)). The chain crosses the membrane as a helical span at residues 791-811 (YFNRGIMAAILVNTLSMGVEY). The Extracellular portion of the chain corresponds to 812 to 824 (HEQPEELTNALEI). A helical transmembrane segment spans residues 825–846 (SNIVFTSMFALEMLLKLLACGP). Topologically, residues 847 to 852 (LGYIRN) are cytoplasmic. A helical transmembrane segment spans residues 853–871 (PYNIFDGIVVVISVWEIVG). Residues 872–879 (QANGGLSV) lie on the Extracellular side of the membrane. A helical membrane pass occupies residues 880–903 (LRTFRLLRVLKLVRFLPALRRQLV). Topologically, residues 904 to 914 (VLMRTMDNVAT) are cytoplasmic. A helical membrane pass occupies residues 915–935 (FCMLLMLFIFIFSILGMHLFG). The Extracellular segment spans residues 936–987 (CKFSLKTDSGDTVPDRKNFDSLLWAIVTVFQILTQEDWNVVLYNGMASTSSW). The chain crosses the membrane as a helical span at residues 988–1012 (AALYFVALMTFGNYVLFNLLVAILV). Residues 1013–1301 (EGFQAEGDAT…NRLRVSCQKV (289 aa)) are Cytoplasmic-facing. The interval 1061 to 1197 (GHLEGRGSLP…GASPGPRATP (137 aa)) is disordered. Polar residues predominate over residues 1117–1126 (SLASLRSSPC). The span at 1130-1147 (GPNSAGSSRRSSWNSLGR) shows a compositional bias: low complexity. An III repeat occupies 1292-1569 (NRLRVSCQKV…MFVGVVVENF (278 aa)). A helical membrane pass occupies residues 1302-1324 (IAHKMFDHVVLVFIFLNCITIAL). Over 1325-1342 (ERPDIDPGSTERAFLSVS) the chain is Extracellular. The chain crosses the membrane as a helical span at residues 1343–1363 (NYIFTAIFVVEMMVKVVALGL). Residues 1364–1373 (LWGEHAYLQS) lie on the Cytoplasmic side of the membrane. A helical transmembrane segment spans residues 1374-1393 (SWNVLDGLLVLVSLVDIIVA). Over 1394 to 1407 (MASAGGAKILGVLR) the chain is Extracellular. A helical transmembrane segment spans residues 1408 to 1429 (VLRLLRTLRPLRVISRAPGLKL). Residues 1430 to 1439 (VVETLISSLR) lie on the Cytoplasmic side of the membrane. A helical membrane pass occupies residues 1440-1463 (PIGNIVLICCAFFIIFGILGVQLF). The Extracellular segment spans residues 1464 to 1540 (KGKFYYCEGT…DQQPVQNHNP (77 aa)). Residue Asn-1477 is glycosylated (N-linked (GlcNAc...) asparagine). The chain crosses the membrane as a helical span at residues 1541 to 1566 (WMLLYFISFLLIVSFFVLNMFVGVVV). Residues 1567–1621 (ENFHKCRQHQEAEEARRREEKRLRRLERRRRKAQRRPYYADYSHTRRSIHSLCTS) are Cytoplasmic-facing. Residues 1607-1868 (DYSHTRRSIH…VVVAVLMKHL (262 aa)) form an IV repeat. A helical transmembrane segment spans residues 1622–1642 (HYLDLFITFIICLNVITMSME). Over 1643 to 1656 (HYNQPKSLDEALKY) the chain is Extracellular. A helical transmembrane segment spans residues 1657 to 1678 (CNYVFTIVFVFEAALKLVAFGF). At 1679-1685 (RRFFKDR) the chain is on the cytoplasmic side. Residues 1686–1704 (WNQLDLAIVLLSIMGIALE) form a helical membrane-spanning segment. At 1705-1718 (EIEMNAALPINPTI) the chain is on the extracellular side. A helical membrane pass occupies residues 1719–1742 (IRIMRVLRIARVLKLLKMATGMRA). Topologically, residues 1743–1756 (LLDTVVQALPQVGN) are cytoplasmic. Residues 1757–1777 (LGLLFMLLFFIYAALGVELFG) form a helical membrane-spanning segment. Over 1778-1840 (RLECSEDNPC…KHCLSYLPAL (63 aa)) the chain is Extracellular. A helical transmembrane segment spans residues 1841-1868 (SPVYFVTFMLVAQFVLVNVVVAVLMKHL). Topologically, residues 1869–2359 (EESNKEARED…APDDSGDEPV (491 aa)) are cytoplasmic. Over residues 1891–1911 (QGSTAQPPPTAQESQGTQPDT) the composition is skewed to polar residues. 4 disordered regions span residues 1891 to 1913 (QGST…DTPN), 1974 to 2003 (SFQV…PRSL), 2016 to 2258 (HSES…GERW), and 2335 to 2359 (PQTP…DEPV). Residues 2016 to 2026 (HSESLEGKVDD) show a composition bias toward basic and acidic residues. Acidic residues predominate over residues 2086–2096 (DEAEAADPADE). The span at 2166 to 2181 (GESHLESGEVRGRASE) shows a compositional bias: basic and acidic residues.

Belongs to the calcium channel alpha-1 subunit (TC 1.A.1.11) family. CACNA1H subfamily. Interacts (via N-terminal cytoplasmic domain) with STAC. In response to raising of intracellular calcium, the T-type channels are activated by CaM-kinase II. As to expression, expressed in brain.

The protein localises to the cell membrane. It catalyses the reaction Ca(2+)(in) = Ca(2+)(out). Voltage-sensitive calcium channel that gives rise to T-type calcium currents. T-type calcium channels belong to the 'low-voltage activated (LVA)' group. A particularity of this type of channel is an opening at quite negative potentials, and a voltage-dependent inactivation. T-type channels serve pacemaking functions in both central neurons and cardiac nodal cells and support calcium signaling in secretory cells and vascular smooth muscle. They may also be involved in the modulation of firing patterns of neurons. In the adrenal zona glomerulosa, participates in the signaling pathway leading to aldosterone production in response to either AGT/angiotensin II, or hyperkalemia. This Rattus norvegicus (Rat) protein is Voltage-dependent T-type calcium channel subunit alpha-1H (Cacna1h).